Reading from the N-terminus, the 101-residue chain is Small ribosomal subunit protein uS10 (101 aa).

It belongs to the universal ribosomal protein uS10 family. In terms of assembly, part of the 30S ribosomal subunit.

Involved in the binding of tRNA to the ribosomes. The polypeptide is Small ribosomal subunit protein uS10 (Mycobacterium bovis (strain ATCC BAA-935 / AF2122/97)).